The following is a 506-amino-acid chain: Cysteine--tRNA ligase (506 aa).

Cys-34 contacts Zn(2+). Residues 36-46 (PTVYDFAHIGN) carry the 'HIGH' region motif. Positions 230, 269, and 273 each coordinate Zn(2+). The short motif at 302 to 306 (KMSKS) is the 'KMSKS' region element. Position 305 (Lys-305) interacts with ATP.

The protein belongs to the class-I aminoacyl-tRNA synthetase family. Monomer. Zn(2+) serves as cofactor.

The protein resides in the cytoplasm. It carries out the reaction tRNA(Cys) + L-cysteine + ATP = L-cysteinyl-tRNA(Cys) + AMP + diphosphate. This Brucella melitensis biotype 2 (strain ATCC 23457) protein is Cysteine--tRNA ligase.